The primary structure comprises 290 residues: Probable aquaporin PIP2-7 (290 aa).

The next 2 helical transmembrane spans lie at alanine 45–isoleucine 65 and glycine 79–cysteine 99. The NPA 1 motif lies at asparagine 109 to alanine 111. 3 helical membrane passes run valine 128–isoleucine 148, serine 168–phenylalanine 188, and isoleucine 202–isoleucine 222. The NPA 2 motif lies at asparagine 230–alanine 232. A helical transmembrane segment spans residues isoleucine 252–leucine 272.

The protein belongs to the MIP/aquaporin (TC 1.A.8) family. PIP (TC 1.A.8.11) subfamily. In terms of tissue distribution, expressed in roots.

It is found in the cell membrane. Functionally, aquaporins facilitate the transport of water and small neutral solutes across cell membranes. This is Probable aquaporin PIP2-7 (PIP2-7) from Oryza sativa subsp. japonica (Rice).